The sequence spans 446 residues: tRNA modification GTPase MnmE (446 aa).

3 residues coordinate (6S)-5-formyl-5,6,7,8-tetrahydrofolate: arginine 22, glutamate 80, and lysine 119. Positions 215–370 constitute a TrmE-type G domain; sequence GLSLVIAGRP…LKKVIKQVVG (156 aa). Asparagine 225 provides a ligand contact to K(+). Residues 225-230, 244-250, and 269-272 contribute to the GTP site; these read NAGKST, TEIAGTT, and DTAG. Mg(2+) is bound at residue serine 229. The K(+) site is built by threonine 244, isoleucine 246, and threonine 249. Threonine 250 lines the Mg(2+) pocket. Residue lysine 446 participates in (6S)-5-formyl-5,6,7,8-tetrahydrofolate binding.

This sequence belongs to the TRAFAC class TrmE-Era-EngA-EngB-Septin-like GTPase superfamily. TrmE GTPase family. Homodimer. Heterotetramer of two MnmE and two MnmG subunits. Requires K(+) as cofactor.

Its subcellular location is the cytoplasm. In terms of biological role, exhibits a very high intrinsic GTPase hydrolysis rate. Involved in the addition of a carboxymethylaminomethyl (cmnm) group at the wobble position (U34) of certain tRNAs, forming tRNA-cmnm(5)s(2)U34. This Legionella pneumophila subsp. pneumophila (strain Philadelphia 1 / ATCC 33152 / DSM 7513) protein is tRNA modification GTPase MnmE.